A 110-amino-acid polypeptide reads, in one-letter code: Nucleotide-binding protein HI1146 homolog (110 aa).

It belongs to the RapZ-like family.

Functionally, displays ATPase and GTPase activities. In Aggregatibacter actinomycetemcomitans (Actinobacillus actinomycetemcomitans), this protein is Nucleotide-binding protein HI1146 homolog.